A 637-amino-acid chain; its full sequence is Probable potassium transport system protein Kup 2 (637 aa).

The tract at residues 1–21 (MDLASRDSEAETVEQSSHSGA) is disordered. The next 12 membrane-spanning stretches (helical) occupy residues 29–49 (LMLG…IYAF), 68–88 (VLSL…VAFV), 116–136 (LILA…IITP), 150–170 (VTPT…AILF), 180–200 (VAAV…VAGL), 228–248 (AAFV…ALYV), 258–278 (IVLA…FGQG), 300–320 (ALMP…QAVI), 359–379 (LLVA…SSLA), 381–401 (AYGI…FVVM), 409–429 (LAVA…FFLA), and 434–454 (IFEG…IMWT).

Belongs to the HAK/KUP transporter (TC 2.A.72) family.

It localises to the cell inner membrane. It carries out the reaction K(+)(in) + H(+)(in) = K(+)(out) + H(+)(out). Transport of potassium into the cell. Likely operates as a K(+):H(+) symporter. The sequence is that of Probable potassium transport system protein Kup 2 from Mesorhizobium japonicum (strain LMG 29417 / CECT 9101 / MAFF 303099) (Mesorhizobium loti (strain MAFF 303099)).